A 312-amino-acid chain; its full sequence is Ribosomal RNA small subunit methyltransferase H (312 aa).

Residues 33 to 35 (GGH), Asp52, Phe81, Asp102, and Gln109 each bind S-adenosyl-L-methionine.

This sequence belongs to the methyltransferase superfamily. RsmH family.

It localises to the cytoplasm. The enzyme catalyses cytidine(1402) in 16S rRNA + S-adenosyl-L-methionine = N(4)-methylcytidine(1402) in 16S rRNA + S-adenosyl-L-homocysteine + H(+). In terms of biological role, specifically methylates the N4 position of cytidine in position 1402 (C1402) of 16S rRNA. The protein is Ribosomal RNA small subunit methyltransferase H of Leuconostoc mesenteroides subsp. mesenteroides (strain ATCC 8293 / DSM 20343 / BCRC 11652 / CCM 1803 / JCM 6124 / NCDO 523 / NBRC 100496 / NCIMB 8023 / NCTC 12954 / NRRL B-1118 / 37Y).